A 321-amino-acid chain; its full sequence is Ribonuclease Z (321 aa).

Residues His-62, His-64, Asp-66, His-67, His-139, Asp-210, and His-268 each contribute to the Zn(2+) site. The active-site Proton acceptor is Asp-66.

The protein belongs to the RNase Z family. As to quaternary structure, homodimer. Zn(2+) is required as a cofactor.

It carries out the reaction Endonucleolytic cleavage of RNA, removing extra 3' nucleotides from tRNA precursor, generating 3' termini of tRNAs. A 3'-hydroxy group is left at the tRNA terminus and a 5'-phosphoryl group is left at the trailer molecule.. In terms of biological role, zinc phosphodiesterase, which displays some tRNA 3'-processing endonuclease activity. Probably involved in tRNA maturation, by removing a 3'-trailer from precursor tRNA. The polypeptide is Ribonuclease Z (Trichodesmium erythraeum (strain IMS101)).